A 525-amino-acid chain; its full sequence is ATP synthase subunit alpha (525 aa).

Glycine 169–threonine 176 lines the ATP pocket.

It belongs to the ATPase alpha/beta chains family. In terms of assembly, F-type ATPases have 2 components, CF(1) - the catalytic core - and CF(0) - the membrane proton channel. CF(1) has five subunits: alpha(3), beta(3), gamma(1), delta(1), epsilon(1). CF(0) has three main subunits: a(1), b(2) and c(9-12). The alpha and beta chains form an alternating ring which encloses part of the gamma chain. CF(1) is attached to CF(0) by a central stalk formed by the gamma and epsilon chains, while a peripheral stalk is formed by the delta and b chains.

It localises to the cell membrane. The enzyme catalyses ATP + H2O + 4 H(+)(in) = ADP + phosphate + 5 H(+)(out). In terms of biological role, produces ATP from ADP in the presence of a proton gradient across the membrane. The alpha chain is a regulatory subunit. The polypeptide is ATP synthase subunit alpha (Mycoplasma mycoides subsp. mycoides SC (strain CCUG 32753 / NCTC 10114 / PG1)).